Consider the following 467-residue polypeptide: Indoleacetamide hydrolase (467 aa).

Catalysis depends on charge relay system residues Lys-74 and Ser-149. Catalysis depends on Ser-173, which acts as the Acyl-ester intermediate.

The protein belongs to the amidase family.

Its pathway is plant hormone metabolism; auxin biosynthesis. Its function is as follows. Hydrolyzes indole-3-acetamide (IAM) into indole-3-acetic acid (IAA). In Agrobacterium vitis (Rhizobium vitis), this protein is Indoleacetamide hydrolase (TA-iaaH).